We begin with the raw amino-acid sequence, 501 residues long: L-lysine transport protein (501 aa).

Transmembrane regions (helical) follow at residues 25-41, 52-76, 92-113, 138-155, 174-191, 214-232, 247-269, 292-316, 340-362, 377-393, 424-440, 447-463, and 477-495; these read LIAL…IFSI, GAML…HVLA, VGLG…SVIA, FVSA…FGVV, ILPL…GFSW, GIMV…ASVY, VIGF…GVLT, WGAA…QMLC, GAAW…IFFL, LYLV…VMLA, LIVG…LFYA, LFGA…YVWT, and IGVV…IGLV.

This sequence belongs to the amino acid-polyamine-organocation (APC) superfamily. Basic amino acid/polyamine antiporter (APA) (TC 2.A.3.2) family.

It is found in the cell membrane. Permease that is involved in the transport across the membrane of lysine. The chain is L-lysine transport protein (lysI) from Corynebacterium glutamicum (strain ATCC 13032 / DSM 20300 / JCM 1318 / BCRC 11384 / CCUG 27702 / LMG 3730 / NBRC 12168 / NCIMB 10025 / NRRL B-2784 / 534).